The following is a 183-amino-acid chain: Ferritin light chain 1 (183 aa).

Residues 7-156 (QNYSTEVEAA…NHLTNLRRVA (150 aa)) enclose the Ferritin-like diiron domain. 5 residues coordinate Fe cation: Glu54, Glu57, Glu58, Glu61, and Glu64.

This sequence belongs to the ferritin family. Oligomer of 24 subunits. There are two types of subunits: L (light) chain and H (heavy) chain. The major chain can be light or heavy, depending on the species and tissue type. The functional molecule forms a roughly spherical shell with a diameter of 12 nm and contains a central cavity into which the insoluble mineral iron core is deposited. Interacts with NCOA4. As to expression, in rat liver, the light chain is the major chain.

It is found in the cytoplasmic vesicle. The protein resides in the autophagosome. It localises to the cytoplasm. Its subcellular location is the autolysosome. Functionally, stores iron in a soluble, non-toxic, readily available form. Important for iron homeostasis. Iron is taken up in the ferrous form and deposited as ferric hydroxides after oxidation. Also plays a role in delivery of iron to cells. Mediates iron uptake in capsule cells of the developing kidney. Delivery to lysosomes by the cargo receptor NCOA4 for autophagic degradation and release or iron. This is Ferritin light chain 1 (Ftl1) from Rattus norvegicus (Rat).